Consider the following 618-residue polypeptide: Probable Xaa-Pro aminopeptidase P (618 aa).

Residues Asp-414, Asp-425, Glu-523, and Glu-537 each coordinate Mn(2+).

This sequence belongs to the peptidase M24B family. Mn(2+) is required as a cofactor.

It catalyses the reaction Release of any N-terminal amino acid, including proline, that is linked to proline, even from a dipeptide or tripeptide.. Functionally, catalyzes the removal of a penultimate prolyl residue from the N-termini of peptides. The polypeptide is Probable Xaa-Pro aminopeptidase P (AMPP) (Metarhizium acridum (strain CQMa 102)).